Reading from the N-terminus, the 267-residue chain is 26S proteasome non-ATPase regulatory subunit 8 homolog A (267 aa).

Met-1 carries the post-translational modification N-acetylmethionine. The region spanning 79–251 (DAFERDFFQL…APCKEIPSLQ (173 aa)) is the PCI domain.

Belongs to the proteasome subunit S14 family. In terms of assembly, component of the 19S regulatory particle (RP/PA700) lid subcomplex of the 26S proteasome. The 26S proteasome is composed of a core protease (CP), known as the 20S proteasome, capped at one or both ends by the 19S regulatory particle (RP/PA700). The RP/PA700 complex is composed of at least 17 different subunits in two subcomplexes, the base and the lid, which form the portions proximal and distal to the 20S proteolytic core, respectively. Interacts with PUB22 and PUB23. Binds to the translation initiation factors TIF3E1. Interacts with UCH1 and UCH2. Ubiquitinated by PUB22 and PUB23. In terms of tissue distribution, ubiquitous with highest expression in flowers.

Its function is as follows. Acts as a regulatory subunit of the 26S proteasome which is involved in the ATP-dependent degradation of ubiquitinated proteins. May help to control the degradation of one or more factors that repress cytokinin signaling. Plays an important role for balancing cell expansion with cell proliferation rates during shoot development. This is 26S proteasome non-ATPase regulatory subunit 8 homolog A from Arabidopsis thaliana (Mouse-ear cress).